We begin with the raw amino-acid sequence, 394 residues long: Elongation factor Tu 2 (394 aa).

The region spanning 10–204 (KPHVNVGTIG…HLDTYIPEPE (195 aa)) is the tr-type G domain. The G1 stretch occupies residues 19 to 26 (GHVDHGKT). 19–26 (GHVDHGKT) is a GTP binding site. Thr-26 contacts Mg(2+). Residues 60-64 (GITIN) form a G2 region. A G3 region spans residues 81-84 (DCPG). Residues 81–85 (DCPGH) and 136–139 (NKCD) each bind GTP. The G4 stretch occupies residues 136-139 (NKCD). Residues 174-176 (SAL) are G5.

The protein belongs to the TRAFAC class translation factor GTPase superfamily. Classic translation factor GTPase family. EF-Tu/EF-1A subfamily. In terms of assembly, monomer.

It is found in the cytoplasm. The catalysed reaction is GTP + H2O = GDP + phosphate + H(+). In terms of biological role, GTP hydrolase that promotes the GTP-dependent binding of aminoacyl-tRNA to the A-site of ribosomes during protein biosynthesis. The polypeptide is Elongation factor Tu 2 (Haemophilus influenzae (strain 86-028NP)).